The sequence spans 465 residues: 6-phospho-beta-glucosidase GmuD (465 aa).

Residue Glu170 is the Proton donor of the active site. Glu368 acts as the Nucleophile in catalysis.

Belongs to the glycosyl hydrolase 1 family.

It catalyses the reaction 6-phospho-beta-D-glucosyl-(1-&gt;4)-D-glucose + H2O = D-glucose 6-phosphate + D-glucose. Phospho-beta-D-glucosidase that seems to be involved in the degradation of glucomannan. Is also capable of hydrolyzing aryl-phospho-beta-D-glucosides, although very weakly, and plays only a minor role, if any, in the degradation of these substrates in vivo. The chain is 6-phospho-beta-glucosidase GmuD (gmuD) from Bacillus subtilis (strain 168).